The primary structure comprises 226 residues: Leucyl/phenylalanyl-tRNA--protein transferase (226 aa).

Belongs to the L/F-transferase family.

It localises to the cytoplasm. The enzyme catalyses N-terminal L-lysyl-[protein] + L-leucyl-tRNA(Leu) = N-terminal L-leucyl-L-lysyl-[protein] + tRNA(Leu) + H(+). It carries out the reaction N-terminal L-arginyl-[protein] + L-leucyl-tRNA(Leu) = N-terminal L-leucyl-L-arginyl-[protein] + tRNA(Leu) + H(+). It catalyses the reaction L-phenylalanyl-tRNA(Phe) + an N-terminal L-alpha-aminoacyl-[protein] = an N-terminal L-phenylalanyl-L-alpha-aminoacyl-[protein] + tRNA(Phe). Functionally, functions in the N-end rule pathway of protein degradation where it conjugates Leu, Phe and, less efficiently, Met from aminoacyl-tRNAs to the N-termini of proteins containing an N-terminal arginine or lysine. The sequence is that of Leucyl/phenylalanyl-tRNA--protein transferase from Ectopseudomonas mendocina (strain ymp) (Pseudomonas mendocina).